A 174-amino-acid chain; its full sequence is Adenine phosphoribosyltransferase (174 aa).

This sequence belongs to the purine/pyrimidine phosphoribosyltransferase family. As to quaternary structure, homodimer.

The protein resides in the cytoplasm. It carries out the reaction AMP + diphosphate = 5-phospho-alpha-D-ribose 1-diphosphate + adenine. It functions in the pathway purine metabolism; AMP biosynthesis via salvage pathway; AMP from adenine: step 1/1. Functionally, catalyzes a salvage reaction resulting in the formation of AMP, that is energically less costly than de novo synthesis. This chain is Adenine phosphoribosyltransferase, found in Phocaeicola vulgatus (strain ATCC 8482 / DSM 1447 / JCM 5826 / CCUG 4940 / NBRC 14291 / NCTC 11154) (Bacteroides vulgatus).